Consider the following 252-residue polypeptide: 3-dehydroquinate dehydratase (252 aa).

3-dehydroquinate is bound by residues S21, E46 to R48, and R82. H143 (proton donor/acceptor) is an active-site residue. K170 serves as the catalytic Schiff-base intermediate with substrate. 3-dehydroquinate contacts are provided by R213, S232, and Q236.

The protein belongs to the type-I 3-dehydroquinase family. Homodimer.

It catalyses the reaction 3-dehydroquinate = 3-dehydroshikimate + H2O. The protein operates within metabolic intermediate biosynthesis; chorismate biosynthesis; chorismate from D-erythrose 4-phosphate and phosphoenolpyruvate: step 3/7. Involved in the third step of the chorismate pathway, which leads to the biosynthesis of aromatic amino acids. Catalyzes the cis-dehydration of 3-dehydroquinate (DHQ) and introduces the first double bond of the aromatic ring to yield 3-dehydroshikimate. This chain is 3-dehydroquinate dehydratase, found in Shigella boydii serotype 4 (strain Sb227).